Reading from the N-terminus, the 511-residue chain is MVLADFISIPTVSIACLAVLGIAYHRHQSNKNTRRPPGPKGYPFIGNLLELVSAERPHLLFPLWIKQYGDIVRFTVFGVENILISKFSTAIELLEKRGAIYSDRPHMVLENEILGWDAAMPTMRYGAQFRKHRKLSNALLNPNAARGYIAIHEEVSLRLLSALAAQPDQFYHHILIYATSTIFRISYDIDITDDKHDLVRLANGAVRKSAEAYQASGALVDVFPSLKWLYNSYPTTAPFSGYRKVIEDIKGEVVQANNIPYEMAKEKMRDGSATRSLVSDAITGLGGLDAISPADEHDIRGLAGILYAGQETTMVTITNTILAMIHHPEVQRKAQAEIDAVVPLDRLPTLDDRANIPYLEAFVKEAYRWACPLIIAIPHTVIQDDVYEGYFIPKGTSIIASIYDMLNQCPNAAAFNPDRFIDGTDLGDVPPDPRDVVFGFGRRRCPGLHVADNSVWAALAQLLASFEFLPELVDGKEVLPPLKWGKEMARHPQPYRCRIVPRENRKHCYAA.

A helical membrane pass occupies residues 2–22; the sequence is VLADFISIPTVSIACLAVLGI. Cys445 lines the heme pocket.

It belongs to the cytochrome P450 family. Heme serves as cofactor.

It localises to the membrane. It carries out the reaction erinacol + reduced [NADPH--hemoprotein reductase] + O2 = cyathadiol + oxidized [NADPH--hemoprotein reductase] + H2O + H(+). It functions in the pathway secondary metabolite biosynthesis. Functionally, cytochrome P450 monooxygenase; part of the gene cluster that mediates the biosynthesis of erinacines, cyathane-xylosides that show unique biological activities, including leishmanicidal activity, stimulating activity for nerve growth-factor synthesis, and agonistic activity toward the kappa opioid receptor. Within the pathway, eriC hydroxylates erinacol at C-15 of the seven-membered ring to yield cyathadiol. The first step of the erinacines biosynthesis pathway is catalyzed by the geranylgeranyl diphosphate (GGPP) synthase eriE via conversion of farnesyl pyrophosphate and isopentyl pyrophosphate into geranylgeranyl pyrophosphate (GGPP). GGPP is then substrate of the diterpene cyclase eriG for the production of cyatha-3,12-diene. The cytochrome P450 monooxygenase eriI then hydroxylates cyatha-3,12-diene at C-14 of the seven-membered ring to produce erinacol, which is further hydroxylated at C-15 by the cytochrome P450 monooxygenase eriC to yield cyathadiol. The cytochrome P450 monooxygenase eriA then catalyzes C-11 hydroxylation in the presence of the short chain dehydrogenase/reductase (SDR) eriH, which leads to the production of cyathatriol. The acetyltransferase eriL converts cyathatriol into 11-O-acetyl-cyathatriol. The SDR eriH catalyzes further oxidation of 11-O-acetyl-cyathatriol into 1-O-acetylcyathin A3. Finally, the glycosyl transferase eriJ tranfers xylose from UDP-xylose onto C-14 of 11-O-acetyl-cyathatriol to form eracine Q. EriJ is also able to convert 11-O-acetyl-cyathatriol to eracine Q2 by using UDP-D-glucose as cosubstrate, but at a lower rate. The sequence is that of Cytochrome P450 monooxyhenase eriC from Hericium erinaceus (Lion's mane mushroom).